The sequence spans 152 residues: Transcriptional repressor NrdR (152 aa).

A zinc finger lies at 3–34 (CAFCGNPDTQVIDSRVSEDGSSIRRRRRCPAC). Residues 49–139 (PQVVKTAGHR…VYRSFQDISE (91 aa)) form the ATP-cone domain.

This sequence belongs to the NrdR family. Zn(2+) serves as cofactor.

In terms of biological role, negatively regulates transcription of bacterial ribonucleotide reductase nrd genes and operons by binding to NrdR-boxes. The chain is Transcriptional repressor NrdR from Chromobacterium violaceum (strain ATCC 12472 / DSM 30191 / JCM 1249 / CCUG 213 / NBRC 12614 / NCIMB 9131 / NCTC 9757 / MK).